The chain runs to 214 residues: Octanoyltransferase (214 aa).

Residues Lys31–Tyr206 form the BPL/LPL catalytic domain. Residues Arg70–His77, Ser137–Gly139, and Gly150–Ala152 contribute to the substrate site. The active-site Acyl-thioester intermediate is Cys168.

This sequence belongs to the LipB family.

It localises to the cytoplasm. The catalysed reaction is octanoyl-[ACP] + L-lysyl-[protein] = N(6)-octanoyl-L-lysyl-[protein] + holo-[ACP] + H(+). The protein operates within protein modification; protein lipoylation via endogenous pathway; protein N(6)-(lipoyl)lysine from octanoyl-[acyl-carrier-protein]: step 1/2. Functionally, catalyzes the transfer of endogenously produced octanoic acid from octanoyl-acyl-carrier-protein onto the lipoyl domains of lipoate-dependent enzymes. Lipoyl-ACP can also act as a substrate although octanoyl-ACP is likely to be the physiological substrate. The sequence is that of Octanoyltransferase from Marinomonas sp. (strain MWYL1).